Here is a 286-residue protein sequence, read N- to C-terminus: Undecaprenyl-diphosphatase (286 aa).

The next 7 helical transmembrane spans lie at 50–70 (GAAF…VYFW), 97–117 (MGWL…IFQD), 126–146 (LWIV…ADAV), 156–176 (LTYK…IPGV), 200–220 (SFLL…YKVM), 236–256 (LATL…LKFV), and 264–284 (FVWY…FNVI).

This sequence belongs to the UppP family.

The protein localises to the cell membrane. It carries out the reaction di-trans,octa-cis-undecaprenyl diphosphate + H2O = di-trans,octa-cis-undecaprenyl phosphate + phosphate + H(+). In terms of biological role, catalyzes the dephosphorylation of undecaprenyl diphosphate (UPP). Confers resistance to bacitracin. The sequence is that of Undecaprenyl-diphosphatase from Arthrobacter sp. (strain FB24).